Consider the following 190-residue polypeptide: MLEKLKTSLINSPVIKRGEYNYFIHPISDGVPSIDPHMVEEIAEYILQITDIKKVDTILTIEAMGIPVANALSLKTGIPLTIVRKRPYFLEGEVELSQRTGYSKGALYINGLKKGDRVIIVDDVISTGGTLIALVKALKTIGVEIQDVISVIGRGTGYLQLKELGVEPKILVTIDVSEKGVEIKNVFGNE.

This sequence belongs to the purine/pyrimidine phosphoribosyltransferase family. Archaeal HPRT subfamily. As to quaternary structure, homodimer.

Its subcellular location is the cytoplasm. The catalysed reaction is IMP + diphosphate = hypoxanthine + 5-phospho-alpha-D-ribose 1-diphosphate. It catalyses the reaction GMP + diphosphate = guanine + 5-phospho-alpha-D-ribose 1-diphosphate. Its pathway is purine metabolism; IMP biosynthesis via salvage pathway; IMP from hypoxanthine: step 1/1. Its function is as follows. Catalyzes a salvage reaction resulting in the formation of IMP that is energically less costly than de novo synthesis. In Methanosarcina barkeri (strain Fusaro / DSM 804), this protein is Hypoxanthine/guanine phosphoribosyltransferase.